We begin with the raw amino-acid sequence, 265 residues long: MSLINLAFKKVKTEKRPALLTYTVAGDSTKKKSLEILKSIAKYADICEIGFPHNTPIADGGQIQSSAYRALKNGIKIKDVFSIVKNFKKSKQSKPVILMGYYNMIYQYGDNNFINICKKVGVDGLIVVDLPYPENKEFAKKCKKKDISFIQLVSPTTSLDRMKKIIRDSHDMVYYISMLSTTGGKLKVSPKKILERYGKIKKLNKNKNIVIGFGITEKTIASLRKADGLVVGSALCKEISNSIKKRQNPVTNVTNIVLKLRKKIS.

Active-site proton acceptor residues include E48 and D59.

The protein belongs to the TrpA family. As to quaternary structure, tetramer of two alpha and two beta chains.

It carries out the reaction (1S,2R)-1-C-(indol-3-yl)glycerol 3-phosphate + L-serine = D-glyceraldehyde 3-phosphate + L-tryptophan + H2O. Its pathway is amino-acid biosynthesis; L-tryptophan biosynthesis; L-tryptophan from chorismate: step 5/5. In terms of biological role, the alpha subunit is responsible for the aldol cleavage of indoleglycerol phosphate to indole and glyceraldehyde 3-phosphate. The sequence is that of Tryptophan synthase alpha chain from Pelagibacter ubique (strain HTCC1062).